The following is a 224-amino-acid chain: UPF0758 protein PD_0117 (224 aa).

An MPN domain is found at 102-224 (SIHDPISAGR…PVSFAEHGWL (123 aa)). Positions 173, 175, and 186 each coordinate Zn(2+). A JAMM motif motif is present at residues 173–186 (HNHPSGNREPSPAD).

This sequence belongs to the UPF0758 family.

This Xylella fastidiosa (strain Temecula1 / ATCC 700964) protein is UPF0758 protein PD_0117.